A 184-amino-acid polypeptide reads, in one-letter code: Protein GrpE (184 aa).

The segment at 1-24 is disordered; sequence MADEQLDEKNLNSEEAGAVNGDAR.

It belongs to the GrpE family. Homodimer.

It localises to the cytoplasm. In terms of biological role, participates actively in the response to hyperosmotic and heat shock by preventing the aggregation of stress-denatured proteins, in association with DnaK and GrpE. It is the nucleotide exchange factor for DnaK and may function as a thermosensor. Unfolded proteins bind initially to DnaJ; upon interaction with the DnaJ-bound protein, DnaK hydrolyzes its bound ATP, resulting in the formation of a stable complex. GrpE releases ADP from DnaK; ATP binding to DnaK triggers the release of the substrate protein, thus completing the reaction cycle. Several rounds of ATP-dependent interactions between DnaJ, DnaK and GrpE are required for fully efficient folding. This Pseudomonas entomophila (strain L48) protein is Protein GrpE.